The sequence spans 98 residues: Hainantoxin-XVII.3 (98 aa).

The signal sequence occupies residues 1–40; the sequence is MTTVGVSLFRRSPEKITMKIATFLGLSFLLIASYFLICEA. A propeptide spanning residues 41-64 is cleaved from the precursor; it reads QHPGFQELLILEENMRDPENSKER. Disulfide bonds link cysteine 66–cysteine 81, cysteine 73–cysteine 85, and cysteine 80–cysteine 95.

Belongs to the hainantoxin family. 17 subfamily. In terms of tissue distribution, expressed by the venom gland.

The protein localises to the secreted. Inhibits with low potency Kv1.2/KCNA2 and Kv1.3/KCNA3 voltage-gated potassium channels. The protein is Hainantoxin-XVII.3 of Cyriopagopus hainanus (Chinese bird spider).